A 376-amino-acid polypeptide reads, in one-letter code: Queuine tRNA-ribosyltransferase (376 aa).

The Proton acceptor role is filled by Asp89. Substrate-binding positions include 89-93 (DSGGF), Asp143, Gln194, and Gly221. The interval 252-258 (GVGIPSN) is RNA binding. Asp271 serves as the catalytic Nucleophile. Positions 276–280 (ARNGR) are RNA binding; important for wobble base 34 recognition. Zn(2+) is bound by residues Cys309, Cys311, Cys314, and His340.

Belongs to the queuine tRNA-ribosyltransferase family. Homodimer. Within each dimer, one monomer is responsible for RNA recognition and catalysis, while the other monomer binds to the replacement base PreQ1. Zn(2+) serves as cofactor.

It catalyses the reaction 7-aminomethyl-7-carbaguanine + guanosine(34) in tRNA = 7-aminomethyl-7-carbaguanosine(34) in tRNA + guanine. It participates in tRNA modification; tRNA-queuosine biosynthesis. Catalyzes the base-exchange of a guanine (G) residue with the queuine precursor 7-aminomethyl-7-deazaguanine (PreQ1) at position 34 (anticodon wobble position) in tRNAs with GU(N) anticodons (tRNA-Asp, -Asn, -His and -Tyr). Catalysis occurs through a double-displacement mechanism. The nucleophile active site attacks the C1' of nucleotide 34 to detach the guanine base from the RNA, forming a covalent enzyme-RNA intermediate. The proton acceptor active site deprotonates the incoming PreQ1, allowing a nucleophilic attack on the C1' of the ribose to form the product. After dissociation, two additional enzymatic reactions on the tRNA convert PreQ1 to queuine (Q), resulting in the hypermodified nucleoside queuosine (7-(((4,5-cis-dihydroxy-2-cyclopenten-1-yl)amino)methyl)-7-deazaguanosine). The chain is Queuine tRNA-ribosyltransferase from Clostridium botulinum (strain Kyoto / Type A2).